A 229-amino-acid chain; its full sequence is 2-C-methyl-D-erythritol 4-phosphate cytidylyltransferase (229 aa).

It belongs to the IspD/TarI cytidylyltransferase family. IspD subfamily.

It catalyses the reaction 2-C-methyl-D-erythritol 4-phosphate + CTP + H(+) = 4-CDP-2-C-methyl-D-erythritol + diphosphate. The protein operates within isoprenoid biosynthesis; isopentenyl diphosphate biosynthesis via DXP pathway; isopentenyl diphosphate from 1-deoxy-D-xylulose 5-phosphate: step 2/6. Its function is as follows. Catalyzes the formation of 4-diphosphocytidyl-2-C-methyl-D-erythritol from CTP and 2-C-methyl-D-erythritol 4-phosphate (MEP). This is 2-C-methyl-D-erythritol 4-phosphate cytidylyltransferase from Neisseria gonorrhoeae (strain NCCP11945).